Reading from the N-terminus, the 431-residue chain is Guanine nucleotide exchange factor rei-2 (431 aa).

Residues 1–21 (MDETATSSEVTETFVSDPTTR) are compositionally biased toward polar residues. Positions 1–28 (MDETATSSEVTETFVSDPTTRQFEEDGH) are disordered. 2 coiled-coil regions span residues 149 to 171 (EVLN…AESL) and 214 to 247 (LEAQ…RISE). Positions 249–298 (IHEERSTGSLESAVSSDQEDQKSDFKSSESLPGNPPPYAPTAPPPYEDKY) are disordered. A compositionally biased stretch (polar residues) spans 255-264 (TGSLESAVSS). Pro residues predominate over residues 281–293 (GNPPPYAPTAPPP).

It belongs to the SH3BP5 family. In terms of assembly, interacts with rab-11.1. Binds preferentially to the GDP-bound form of rab-11.1.

Guanine nucleotide exchange factor for Rab GTPase Rab-11.1. May spatially and temporally regulate the distribution of Rab-11.1 to target membranes during embryogenesis. May play a role in cytokinesis, probably by targeting rab-11.1 to the cleavage furrows. The chain is Guanine nucleotide exchange factor rei-2 from Caenorhabditis elegans.